The sequence spans 122 residues: NADH-ubiquinone oxidoreductase chain 3 (122 aa).

The next 3 membrane-spanning stretches (helical) occupy residues 12-32 (VLIF…LSYV), 66-86 (LVAI…PWAV), and 91-111 (VTIF…VGFI).

This sequence belongs to the complex I subunit 3 family.

It is found in the mitochondrion membrane. The enzyme catalyses a ubiquinone + NADH + 5 H(+)(in) = a ubiquinol + NAD(+) + 4 H(+)(out). Its function is as follows. Core subunit of the mitochondrial membrane respiratory chain NADH dehydrogenase (Complex I) that is believed to belong to the minimal assembly required for catalysis. Complex I functions in the transfer of electrons from NADH to the respiratory chain. The immediate electron acceptor for the enzyme is believed to be ubiquinone. This is NADH-ubiquinone oxidoreductase chain 3 (NAD3) from Reclinomonas americana.